Reading from the N-terminus, the 393-residue chain is 8-amino-7-oxononanoate synthase (393 aa).

Residue glycine 107–phenylalanine 108 coordinates pyridoxal 5'-phosphate. Histidine 132 serves as a coordination point for substrate. Pyridoxal 5'-phosphate contacts are provided by residues serine 180, aspartate 205–histidine 208, and threonine 236–lysine 239. N6-(pyridoxal phosphate)lysine is present on lysine 239. Residue threonine 353 participates in substrate binding.

The protein belongs to the class-II pyridoxal-phosphate-dependent aminotransferase family. BioF subfamily. As to quaternary structure, homodimer. Pyridoxal 5'-phosphate is required as a cofactor.

It catalyses the reaction 6-carboxyhexanoyl-[ACP] + L-alanine + H(+) = (8S)-8-amino-7-oxononanoate + holo-[ACP] + CO2. It functions in the pathway cofactor biosynthesis; biotin biosynthesis. In terms of biological role, catalyzes the decarboxylative condensation of pimeloyl-[acyl-carrier protein] and L-alanine to produce 8-amino-7-oxononanoate (AON), [acyl-carrier protein], and carbon dioxide. In Coprothermobacter proteolyticus (strain ATCC 35245 / DSM 5265 / OCM 4 / BT), this protein is 8-amino-7-oxononanoate synthase.